Reading from the N-terminus, the 347-residue chain is UDP-3-O-acylglucosamine N-acyltransferase (347 aa).

H242 acts as the Proton acceptor in catalysis.

This sequence belongs to the transferase hexapeptide repeat family. LpxD subfamily. Homotrimer.

It catalyses the reaction a UDP-3-O-[(3R)-3-hydroxyacyl]-alpha-D-glucosamine + a (3R)-hydroxyacyl-[ACP] = a UDP-2-N,3-O-bis[(3R)-3-hydroxyacyl]-alpha-D-glucosamine + holo-[ACP] + H(+). It functions in the pathway bacterial outer membrane biogenesis; LPS lipid A biosynthesis. In terms of biological role, catalyzes the N-acylation of UDP-3-O-acylglucosamine using 3-hydroxyacyl-ACP as the acyl donor. Is involved in the biosynthesis of lipid A, a phosphorylated glycolipid that anchors the lipopolysaccharide to the outer membrane of the cell. The protein is UDP-3-O-acylglucosamine N-acyltransferase of Dechloromonas aromatica (strain RCB).